The sequence spans 443 residues: Xaa-Pro dipeptidase (443 aa).

Residues D246, D257, H339, E384, and E423 each coordinate Mn(2+).

It belongs to the peptidase M24B family. Bacterial-type prolidase subfamily. It depends on Mn(2+) as a cofactor.

It carries out the reaction Xaa-L-Pro dipeptide + H2O = an L-alpha-amino acid + L-proline. Functionally, splits dipeptides with a prolyl residue in the C-terminal position. The protein is Xaa-Pro dipeptidase of Escherichia fergusonii (strain ATCC 35469 / DSM 13698 / CCUG 18766 / IAM 14443 / JCM 21226 / LMG 7866 / NBRC 102419 / NCTC 12128 / CDC 0568-73).